Consider the following 228-residue polypeptide: Death domain-containing membrane protein NRADD (228 aa).

Residues 1 to 52 are Extracellular-facing; it reads MLHNVSKGVVYSDTALKGQDGDREGMWVGAGGALAPNTSSLFPPEPPGASSN. N-linked (GlcNAc...) asparagine glycosylation is found at asparagine 4 and asparagine 37. The helical; Signal-anchor for type III membrane protein transmembrane segment at 53 to 73 threads the bilayer; it reads IIPVYCALLATVVLGLLAYVA. Residues 74-228 are Cytoplasmic-facing; that stretch reads FKCWRSRKQR…SSPAEGCSVV (155 aa). One can recognise a Death domain in the interval 143-222; the sequence is EEVQRLLILG…DVVQVLSSPA (80 aa).

As to quaternary structure, interacts with NTRK1. Isoform 1 and isoform 2 interact with NGFR. Interacts with SORT1. Isoform 1 is N-glycosylated. Isoform 2 is not N-glycosylated. Detected in embryo, including embryonic brain. Detected at very low levels in adult testis, spleen, thymus and lung.

It localises to the cell membrane. The protein resides in the nucleus. In terms of biological role, modulates NTRK1 signaling. Can activate several intracellular signaling pathways, leading to activation of JUN. Promotes translocation of SORT1 to the cell membrane, and thereby hinders lysosomal degradation of SOTR1 and promotes its interaction with NGFR. Both isoform 1 and isoform 2 promote apoptosis. In Rattus norvegicus (Rat), this protein is Death domain-containing membrane protein NRADD (Nradd).